Reading from the N-terminus, the 2373-residue chain is Highly reducing polyketide synthase (2373 aa).

Positions 19 to 446 constitute a Ketosynthase family 3 (KS3) domain; sequence QEPIAVVGIA…GSNAHVIVEE (428 aa). Active-site for beta-ketoacyl synthase activity residues include Cys-192, His-329, and His-369. Residues 560 to 874 form a malonyl-CoA:ACP transacylase (MAT) domain region; that stretch reads IFTGQGAQWP…QYTSAMARGA (315 aa). Residue Ser-652 is the For malonyltransferase activity of the active site. The N-terminal hotdog fold stretch occupies residues 942–1078; sequence HDLLGSKVLG…GLIRIDEDVP (137 aa). The interval 942-1241 is dehydratase (DH) domain; sequence HDLLGSKVLG…LSGLRYTRID (300 aa). Residues 942–1246 enclose the PKS/mFAS DH domain; sequence HDLLGSKVLG…YTRIDTGPSV (305 aa). His-974 (proton acceptor; for dehydratase activity) is an active-site residue. The tract at residues 1090–1246 is C-terminal hotdog fold; it reads SHQVDASLWH…YTRIDTGPSV (157 aa). The active-site Proton donor; for dehydratase activity is Asp-1154. The interval 1669 to 1985 is enoyl reductase (ER) domain; the sequence is GTTDSLIYSE…SANHIGKIVI (317 aa). Residues 2010–2187 form a ketoreductase (KR) domain region; it reads GYLLIGGLKG…NSVDLGAIQD (178 aa). One can recognise a Carrier domain in the interval 2294–2370; the sequence is AIHDAVIDVT…QLAQKIVARL (77 aa). Ser-2330 carries the post-translational modification O-(pantetheine 4'-phosphoryl)serine.

The cofactor is pantetheine 4'-phosphate.

It functions in the pathway mycotoxin biosynthesis. In terms of biological role, highly reducing polyketide synthase; part of the gene cluster that mediates the biosynthesis of brefeldin A (BFA), a protein transport inhibitor that shows antiviral, antifungal, and antitumor properties. The proposed biosynthesis of BFA involves formation of an acyclic polyketide chain that is differentially tailored throughout the backbone. The highly reducing polyketide synthase Bref-PKS is proposed to synthesize the precisely reduced octaketide precursor, which could then be directly offloaded by the thiohydrolase enzyme Bref-TH followed by a cytochrome P450 monooxygenase-mediated formation of the cyclopentane ring and macrocyclization to afford 7-deoxy BFA. Alternatively, the first ring annulation can also occur on the ACP-tethered intermediate before the thiohydrolase release and lactonization. The C7-hydroxylation by another cytochrome P450 monooxygenase is believed to be the final step in the process to obtain the final structure of BFA. In addition to the HRPKS Bref-PKS and the thiohydrolase Bref-TH, the brefeldin A biosynthesis cluster contains 4 cytochrome p450 monooxygenases (called orf3 to orf6), as well a the probable cluster-specific transcription regulator orf8. In Eupenicillium brefeldianum (Penicillium brefeldianum), this protein is Highly reducing polyketide synthase.